We begin with the raw amino-acid sequence, 914 residues long: TRPM8 channel-associated factor 3 (914 aa).

Positions 533-832 constitute a Peptidase M60 domain; the sequence is NSWVSTGLYL…TYLQLQEGFG (300 aa).

It belongs to the TCAF family. As to expression, prostate-specific. Present in both dorso-lateral and anterior prostate.

In terms of biological role, may play a role in the regulation of the cation channel TRPM8 activity. The protein is TRPM8 channel-associated factor 3 of Mus musculus (Mouse).